Reading from the N-terminus, the 149-residue chain is Large ribosomal subunit protein uL11 (149 aa).

Belongs to the universal ribosomal protein uL11 family. As to quaternary structure, part of the ribosomal stalk of the 50S ribosomal subunit. Interacts with L10 and the large rRNA to form the base of the stalk. L10 forms an elongated spine to which L12 dimers bind in a sequential fashion forming a multimeric L10(L12)X complex. In terms of processing, one or more lysine residues are methylated.

Its function is as follows. Forms part of the ribosomal stalk which helps the ribosome interact with GTP-bound translation factors. The chain is Large ribosomal subunit protein uL11 from Xanthobacter autotrophicus (strain ATCC BAA-1158 / Py2).